The primary structure comprises 160 residues: Phosphoribosyl-ATP pyrophosphatase (160 aa).

This sequence belongs to the PRA-PH family.

The protein resides in the cytoplasm. The enzyme catalyses 1-(5-phospho-beta-D-ribosyl)-ATP + H2O = 1-(5-phospho-beta-D-ribosyl)-5'-AMP + diphosphate + H(+). It participates in amino-acid biosynthesis; L-histidine biosynthesis; L-histidine from 5-phospho-alpha-D-ribose 1-diphosphate: step 2/9. The protein is Phosphoribosyl-ATP pyrophosphatase of Granulibacter bethesdensis (strain ATCC BAA-1260 / CGDNIH1).